A 553-amino-acid chain; its full sequence is MSDIALTVSVLALVAVVGLWIGNIKVRGVGFGIGGVLFGGIIVGHFVDQAGMTLSGDMLHFIQEFGLILFVYTIGIQVGPGFFASLRVSGLRLNLFAVLIVIMGGLVTAILHKIFAIPLPVVLGIFSGAVTNTPALGAGQQILRDLGTPVDLVDQMGMSYAMAYPFGICGILLTMWLMRLIFRVNVEAEAQKHESSLANGHSLIQTMNIRVENPNLNNMAIQDVPILNSDKIICSRLKRDDTLMVPSPGTIIQAGDLLHLVGQSTDLHNAQLVIGKEVDTSLSTRGTDLRVERVVVTNEKVLGKRIRDLHFKERYDVVISRLNRAGVELVATSDASLQFGDILNLVGRPASIDAVANVVGNAQQKLQQVQMLPVFIGIGLGVLLGSIPLFVPGFPVALKLGLAGGPLIIALILGRIGSIGKLYWFMPPSANLALRELGIVLFLAVVGLKSGGNFVNTLTQGEGLSWIGYGIFITAIPLITVGLLARIFAKMNYLTLCGMLAGSMTDPPALAFANNLHATSGAAALSYATVYPLVMFLRIITPQLLAVIFWGIG.

5 helical membrane-spanning segments follow: residues 4–24 (IALT…IGNI), 28–48 (GVGF…HFVD), 65–85 (FGLI…FFAS), 95–115 (LFAV…HKIF), and 158–178 (MSYA…MWLM). RCK C-terminal domains lie at 192 to 276 (KHES…VIGK) and 279 to 361 (DTSL…VVGN). Helical transmembrane passes span 371 to 391 (MLPV…PLFV), 403 to 425 (AGGP…LYWF), 437 to 457 (LGIV…FVNT), 464 to 484 (LSWI…VGLL), and 533 to 553 (LVMF…WGIG).

It belongs to the AAE transporter (TC 2.A.81) family. YidE subfamily.

It localises to the cell membrane. This is Putative transport protein YidE from Salmonella arizonae (strain ATCC BAA-731 / CDC346-86 / RSK2980).